The following is a 282-amino-acid chain: D-alanine aminotransferase (282 aa).

Tyr32 lines the substrate pocket. Arg51 contacts pyridoxal 5'-phosphate. Substrate is bound by residues Arg99 and His101. The active-site Proton acceptor is Lys146. N6-(pyridoxal phosphate)lysine is present on Lys146. Glu178 lines the pyridoxal 5'-phosphate pocket.

The protein belongs to the class-IV pyridoxal-phosphate-dependent aminotransferase family. Homodimer. It depends on pyridoxal 5'-phosphate as a cofactor.

The catalysed reaction is D-alanine + 2-oxoglutarate = D-glutamate + pyruvate. Functionally, acts on the D-isomers of alanine, leucine, aspartate, glutamate, aminobutyrate, norvaline and asparagine. The enzyme transfers an amino group from a substrate D-amino acid to the pyridoxal phosphate cofactor to form pyridoxamine and an alpha-keto acid in the first half-reaction. The second half-reaction is the reverse of the first, transferring the amino group from the pyridoxamine to a second alpha-keto acid to form the product D-amino acid via a ping-pong mechanism. This is an important process in the formation of D-alanine and D-glutamate, which are essential bacterial cell wall components. The sequence is that of D-alanine aminotransferase (dat) from Staphylococcus haemolyticus.